The chain runs to 483 residues: Aspartyl/glutamyl-tRNA(Asn/Gln) amidotransferase subunit B (483 aa).

The protein belongs to the GatB/GatE family. GatB subfamily. In terms of assembly, heterotrimer of A, B and C subunits.

The enzyme catalyses L-glutamyl-tRNA(Gln) + L-glutamine + ATP + H2O = L-glutaminyl-tRNA(Gln) + L-glutamate + ADP + phosphate + H(+). The catalysed reaction is L-aspartyl-tRNA(Asn) + L-glutamine + ATP + H2O = L-asparaginyl-tRNA(Asn) + L-glutamate + ADP + phosphate + 2 H(+). Functionally, allows the formation of correctly charged Asn-tRNA(Asn) or Gln-tRNA(Gln) through the transamidation of misacylated Asp-tRNA(Asn) or Glu-tRNA(Gln) in organisms which lack either or both of asparaginyl-tRNA or glutaminyl-tRNA synthetases. The reaction takes place in the presence of glutamine and ATP through an activated phospho-Asp-tRNA(Asn) or phospho-Glu-tRNA(Gln). The polypeptide is Aspartyl/glutamyl-tRNA(Asn/Gln) amidotransferase subunit B (Anaeromyxobacter sp. (strain Fw109-5)).